A 241-amino-acid chain; its full sequence is Ribosomal RNA small subunit methyltransferase J (241 aa).

Residues 94–95 (RD) and Asp-163 contribute to the S-adenosyl-L-methionine site.

It belongs to the methyltransferase superfamily. RsmJ family.

The protein resides in the cytoplasm. The enzyme catalyses guanosine(1516) in 16S rRNA + S-adenosyl-L-methionine = N(2)-methylguanosine(1516) in 16S rRNA + S-adenosyl-L-homocysteine + H(+). Specifically methylates the guanosine in position 1516 of 16S rRNA. This Francisella tularensis subsp. tularensis (strain FSC 198) protein is Ribosomal RNA small subunit methyltransferase J.